The sequence spans 529 residues: Fusion glycoprotein F0 (529 aa).

Positions 1 to 26 (MSIMGLKVNVSAIFMAVLLTLQTPTG) are cleaved as a signal peptide. Over 27-490 (QIHWGNLSKI…ESSDQILRSM (464 aa)) the chain is Extracellular. 3 N-linked (GlcNAc...) asparagine; by host glycosylation sites follow: Asn32, Asn64, and Asn70. Residues 72 to 98 (TRVEIAEYRRLLRTVLEPIRDALNAMT) form an HRC region. Positions 116 to 141 (FAGVVLAGAALGVATAAQITAGIALH) are fusion peptide. A coiled-coil region spans residues 141-169 (HQSMLSSQAIDNLRASLETTNQAIEAIRQ). Residues 142-218 (QSMLSSQAID…LLRYYTEILS (77 aa)) are HRA. 4 disulfides stabilise this stretch: Cys337–Cys346, Cys361–Cys369, Cys393–Cys398, and Cys400–Cys423. Positions 370–447 (ARTLVSGSFG…RRYPDAVDLH (78 aa)) are interaction with hemagglutinin. The interval 448–497 (RIDLGPPISLERLDVGTNLGSAIAKLEDAKELLESSDQILRSMKGLSSTS) is HRB. Positions 465 to 490 (NLGSAIAKLEDAKELLESSDQILRSM) form a coiled coil. Residues 491-521 (KGLSSTSIVYILIAVCLGGLIGIPALICCCR) form a helical membrane-spanning segment. Over 522 to 529 (GRCNKKGE) the chain is Cytoplasmic.

It belongs to the paramyxoviruses fusion glycoprotein family. As to quaternary structure, homotrimer of disulfide-linked F1-F2. In terms of processing, the inactive precursor F0 is glycosylated and proteolytically cleaved into F1 and F2 to be functionally active. The cleavage is mediated by host furin during the transport and maturation of the polypeptide.

It localises to the virion membrane. The protein localises to the host cell membrane. Its function is as follows. Class I viral fusion protein. Under the current model, the protein has at least 3 conformational states: pre-fusion native state, pre-hairpin intermediate state, and post-fusion hairpin state. During viral and plasma cell membrane fusion, the heptad repeat (HR) regions assume a trimer-of-hairpins structure, positioning the fusion peptide in close proximity to the C-terminal region of the ectodomain. The formation of this structure appears to drive apposition and subsequent fusion of viral and plasma cell membranes. Directs fusion of viral and cellular membranes leading to delivery of the nucleocapsid into the cytoplasm. This fusion is pH independent and occurs directly at the outer cell membrane. During viral entry or virus-mediated fusion between infected cells and neighboring susceptible cells, the head domain of the H protein initially binds to its receptor and then the stalk region of the H protein transmits the fusion-triggering signal to the F protein. Upon HN binding to its cellular receptor, the hydrophobic fusion peptide is unmasked and interacts with the cellular membrane, inducing the fusion between cell and virion membranes. Later in infection, F proteins expressed at the plasma membrane of infected cells could mediate fusion with adjacent cells to form syncytia, a cytopathic effect that could lead to tissue necrosis. Functionally, some hyperfusogenic isolates can induce membrane fusion in SLAM- and nectin-4-negative cells and are linked to fatal subacute sclerosing panencephalitis (SSPE) or measles inclusion body encephalitis (MIBE). The neuropathogenicity is closely associated with enhanced propagation mediated by cell-to-cell fusion in the brain, which is principally regulated by hyperfusogenic mutations of the viral F protein. Cell-to-cell transmission of the virus also occurs with hyperfusogenic isolates. This chain is Fusion glycoprotein F0 (F), found in Homo sapiens (Human).